The sequence spans 20 residues: MRLTQGAFSYLPDLTDAQII.

It belongs to the RuBisCO small chain family. Heterohexadecamer of 8 large and 8 small subunits.

It localises to the plastid. The protein localises to the chloroplast. Functionally, ruBisCO catalyzes two reactions: the carboxylation of D-ribulose 1,5-bisphosphate, the primary event in carbon dioxide fixation, as well as the oxidative fragmentation of the pentose substrate in the photorespiration process. Both reactions occur simultaneously and in competition at the same active site. Although the small subunit is not catalytic it is essential for maximal activity. This is Ribulose bisphosphate carboxylase small subunit from Chattonella marina var. antiqua (Red tide flagellate).